Here is a 481-residue protein sequence, read N- to C-terminus: Thyroid receptor-interacting protein 6 (481 aa).

Pro residues predominate over residues 1–12 (MSGPTWLPPKQP). Positions 1 to 259 (MSGPTWLPPK…QVPLSQPPEE (259 aa)) are disordered. Asymmetric dimethylarginine; alternate is present on R25. Omega-N-methylarginine; alternate is present on R25. Y55 carries the post-translational modification Phosphotyrosine; by SRC. A Phosphoserine modification is found at S92. Basic and acidic residues predominate over residues 108-122 (DGGRGHAPRRPDRQA). R111 is subject to Omega-N-methylarginine. 2 stretches are compositionally biased toward low complexity: residues 153-173 (SPYG…AGPA) and 183-193 (PVRGCGPPRRG). An omega-N-methylarginine mark is found at R185 and R192. Position 195 is a phosphoserine (S195). An Omega-N-methylarginine modification is found at R211. Over residues 221–233 (SHREPGPGVKEEA) the composition is skewed to basic and acidic residues. The residue at position 243 (R243) is an Omega-N-methylarginine. A Phosphoserine modification is found at S254. LIM zinc-binding domains lie at 284-321 (CGGC…QLRG), 344-403 (CSTC…FAPR), and 404-472 (CSVC…RIQE). Residues 474–481 (SATVTTDC) are interaction with MAGI1 and PTPN13.

It belongs to the zyxin/ajuba family. Specifically interacts with the ligand binding domain of the thyroid receptor (TR) in the presence of thyroid hormone. Interacts (via the third LIM domain and C-terminus) with PTPN13 (via the second PDZ domain). Interacts (via the second LIM domain or via the third LIM domain plus C-terminus) with PDLIM4 (via PDZ domain). Found in a complex with PTPN13 and PDLIM4. Interacts with SVIL isoform 2. Interacts with LPAR2 but not other LPA receptors. Interacts with PRKAA2. Interacts with MAGI1. Interacts with SCRIB. Post-translationally, phosphorylation at Tyr-55 by SRC is required for enhancement of lysophosphatidic acid-induced cell migration. Tyr-55 is dephosphorylated by PTPN13.

It is found in the cytoplasm. It localises to the cytoskeleton. Its subcellular location is the cell junction. The protein localises to the focal adhesion. The protein resides in the nucleus. Relays signals from the cell surface to the nucleus to weaken adherens junction and promote actin cytoskeleton reorganization and cell invasiveness. Involved in lysophosphatidic acid-induced cell adhesion and migration. Acts as a transcriptional coactivator for NF-kappa-B and JUN, and mediates the transrepression of these transcription factors induced by glucocorticoid receptor. The sequence is that of Thyroid receptor-interacting protein 6 (TRIP6) from Bos taurus (Bovine).